A 350-amino-acid chain; its full sequence is Probable dual-specificity RNA methyltransferase RlmN (350 aa).

Residue glutamate 93 is the Proton acceptor of the active site. A Radical SAM core domain is found at 99–327; that stretch reads SSKRLTVCVS…VSVRYSRGVQ (229 aa). A disulfide bridge links cysteine 106 with cysteine 332. [4Fe-4S] cluster is bound by residues cysteine 113, cysteine 117, and cysteine 120. Residues 160–161, serine 190, 213–215, and asparagine 289 contribute to the S-adenosyl-L-methionine site; these read GE and SLH. Cysteine 332 functions as the S-methylcysteine intermediate in the catalytic mechanism.

The protein belongs to the radical SAM superfamily. RlmN family. Requires [4Fe-4S] cluster as cofactor.

It is found in the cytoplasm. It carries out the reaction adenosine(2503) in 23S rRNA + 2 reduced [2Fe-2S]-[ferredoxin] + 2 S-adenosyl-L-methionine = 2-methyladenosine(2503) in 23S rRNA + 5'-deoxyadenosine + L-methionine + 2 oxidized [2Fe-2S]-[ferredoxin] + S-adenosyl-L-homocysteine. The catalysed reaction is adenosine(37) in tRNA + 2 reduced [2Fe-2S]-[ferredoxin] + 2 S-adenosyl-L-methionine = 2-methyladenosine(37) in tRNA + 5'-deoxyadenosine + L-methionine + 2 oxidized [2Fe-2S]-[ferredoxin] + S-adenosyl-L-homocysteine. Functionally, specifically methylates position 2 of adenine 2503 in 23S rRNA and position 2 of adenine 37 in tRNAs. This Synechocystis sp. (strain ATCC 27184 / PCC 6803 / Kazusa) protein is Probable dual-specificity RNA methyltransferase RlmN.